A 336-amino-acid chain; its full sequence is Glyceraldehyde-3-phosphate dehydrogenase (336 aa).

Residues 12–13, Asp-34, and Ser-120 each bind NAD(+); that span reads RI. Residues 150-152, Thr-181, Arg-198, 211-212, and Arg-234 contribute to the D-glyceraldehyde 3-phosphate site; these read SCT and TG. The Nucleophile role is filled by Cys-151. Asn-316 provides a ligand contact to NAD(+).

This sequence belongs to the glyceraldehyde-3-phosphate dehydrogenase family. In terms of assembly, homotetramer.

It localises to the cytoplasm. It carries out the reaction D-glyceraldehyde 3-phosphate + phosphate + NAD(+) = (2R)-3-phospho-glyceroyl phosphate + NADH + H(+). Its pathway is carbohydrate degradation; glycolysis; pyruvate from D-glyceraldehyde 3-phosphate: step 1/5. Catalyzes the oxidative phosphorylation of glyceraldehyde 3-phosphate (G3P) to 1,3-bisphosphoglycerate (BPG) using the cofactor NAD. The first reaction step involves the formation of a hemiacetal intermediate between G3P and a cysteine residue, and this hemiacetal intermediate is then oxidized to a thioester, with concomitant reduction of NAD to NADH. The reduced NADH is then exchanged with the second NAD, and the thioester is attacked by a nucleophilic inorganic phosphate to produce BPG. This is Glyceraldehyde-3-phosphate dehydrogenase (gapA) from Staphylococcus aureus.